A 79-amino-acid polypeptide reads, in one-letter code: Hematopoietic cell signal transducer (79 aa).

The N-terminal stretch at 1–17 (MDPPGYLLFLLLLPVAA) is a signal peptide. Topologically, residues 18 to 35 (SQTSAGSCSGCGTLSLPL) are extracellular. The chain crosses the membrane as a helical span at residues 36 to 56 (LAGLVAADAVMSLLIVGVVFV). The Cytoplasmic portion of the chain corresponds to 57–79 (CMRPHGRPAQEDGRVYINMPGRG). The residue at position 72 (Y72) is a Phosphotyrosine. Residues 72–74 (YIN) are GRB2 binding site. The tract at residues 72 to 75 (YINM) is PIK3R1 binding site.

The protein belongs to the DAP10 family. As to quaternary structure, homodimer; Disulfide-linked. Interacts with KLRK1 to form a stable complex, which results in surface expression of both proteins, whereas alone, it is minimally expressed. Interacts with PIK3R1 and GRB2. Interacts with CLEC5A. Forms an CLEC5A/TYROBP/HCST trimolecular complex depending almost solely on TYROBP. Heterohexamer composed of four subunits of HCST/DAP10 and two subunits of KLRK1. Interacts (via transmembrane domain) with KLRK1 isoform 1 (via transmembrane domain); the interaction is required for KLRK1 cell surface expression on naive NK cells and activated CD8(+) T-cells, but is dispensable on activated TYROBP-expressing NK cells. Interacts (via transmembrane domain) with KLRK1 isoform 2 (via transmembrane domain); the interaction is required for KLRK1 NK cell surface expression and induces NK cell-mediated cytotoxicity. Interacts with CD300H. Post-translationally, phosphorylated; PIK3R1 and GRB2 associate specifically with tyrosine-phosphorylated HCST. O-glycosylated.

The protein resides in the membrane. Functionally, transmembrane adapter protein which associates with KLRK1 to form an activation receptor KLRK1-HCST in lymphoid and myeloid cells; this receptor plays a major role in triggering cytotoxicity against target cells expressing cell surface ligands such as MHC class I chain-related MICA and MICB, and UL16-binding proteins (ULBPs); these ligands are up-regulated by stress conditions and pathological state such as viral infection and tumor transformation. Functions as a docking site for PI3-kinase PIK3R1 and GRB2. Interaction of ULBPs with KLRK1-HCST triggers calcium mobilization and activation of the PIK3R1, MAP2K/ERK, and JAK2/STAT5 signaling pathways. Both PIK3R1 and GRB2 are required for full KLRK1-HCST-mediated activation and ultimate killing of target cells. In NK cells, KLRK1-HCST signaling directly induces cytotoxicity and enhances cytokine production initiated via DAP12/TYROBP-associated receptors. In T-cells, it provides primarily costimulation for TCR-induced signals. KLRK1-HCST receptor plays a role in immune surveillance against tumors and is required for cytolysis of tumors cells; indeed, melanoma cells that do not express KLRK1 ligands escape from immune surveillance mediated by NK cells. In Mus musculus (Mouse), this protein is Hematopoietic cell signal transducer (Hcst).